We begin with the raw amino-acid sequence, 255 residues long: 5'-nucleotidase SurE (255 aa).

4 residues coordinate a divalent metal cation: aspartate 8, aspartate 9, serine 39, and asparagine 95.

Belongs to the SurE nucleotidase family. A divalent metal cation is required as a cofactor.

The protein resides in the cytoplasm. It catalyses the reaction a ribonucleoside 5'-phosphate + H2O = a ribonucleoside + phosphate. In terms of biological role, nucleotidase that shows phosphatase activity on nucleoside 5'-monophosphates. The polypeptide is 5'-nucleotidase SurE (Thermosipho melanesiensis (strain DSM 12029 / CIP 104789 / BI429)).